Reading from the N-terminus, the 394-residue chain is Cell division protein FtsZ (394 aa).

Residues 21-25, R29, 108-110, E139, R143, N166, and D187 each bind GTP; these read GGGNN and GTG. Positions 317–394 are disordered; sequence DKPSSQGRKA…EERRSRRTRR (78 aa). Low complexity-rich tracts occupy residues 328–346 and 353–364; these read STGF…SGAS and SAHTSHSQSSES. Positions 365-388 are enriched in basic and acidic residues; the sequence is VSERSHTTKDDDIPSFIRNREERR.

The protein belongs to the FtsZ family. Homodimer. Polymerizes to form a dynamic ring structure in a strictly GTP-dependent manner. Interacts directly with several other division proteins.

It localises to the cytoplasm. In terms of biological role, essential cell division protein that forms a contractile ring structure (Z ring) at the future cell division site. The regulation of the ring assembly controls the timing and the location of cell division. One of the functions of the FtsZ ring is to recruit other cell division proteins to the septum to produce a new cell wall between the dividing cells. Binds GTP and shows GTPase activity. The sequence is that of Cell division protein FtsZ from Staphylococcus epidermidis (strain ATCC 35984 / DSM 28319 / BCRC 17069 / CCUG 31568 / BM 3577 / RP62A).